The chain runs to 947 residues: DNA polymerase (947 aa).

This sequence belongs to the DNA polymerase type-B family.

The catalysed reaction is DNA(n) + a 2'-deoxyribonucleoside 5'-triphosphate = DNA(n+1) + diphosphate. The polypeptide is DNA polymerase (Red sea bream iridovirus (RSIV)).